The sequence spans 718 residues: Homeobox-leucine zipper protein HDG9 (718 aa).

Positions 1–12 are enriched in basic and acidic residues; that stretch reads MDFTRDDNSSDE. The disordered stretch occupies residues 1–35; the sequence is MDFTRDDNSSDERENDVDANTNNRHEKKGYHRHTN. The homeobox DNA-binding region spans 26–85; it reads EKKGYHRHTNEQIHRLETYFKECPHPDEFQRRLLGEELNLKPKQIKFWFQNKRTQAKSHN. Residues 78–152 adopt a coiled-coil conformation; that stretch reads RTQAKSHNEK…LKDEYERVSN (75 aa). The interval 169 to 209 is disordered; that stretch reads PYLHGPSNHASTSKNRPALYGTSSNRLPEPSSIFRGPYTRG. The span at 176-194 shows a compositional bias: polar residues; sequence NHASTSKNRPALYGTSSNR. The region spanning 232-464 is the START domain; sequence SQLEKIAMLE…LERTCERLIF (233 aa).

It belongs to the HD-ZIP homeobox family. Class IV subfamily. In terms of tissue distribution, expressed in anthers with highest levels in the tapetum and pollen grains, and chalazal end of the embryo sac.

It is found in the nucleus. Probable transcription factor that binds to the DNA sequence 5'-GCATTAAATGCGCA-3'. This is Homeobox-leucine zipper protein HDG9 (HDG9) from Arabidopsis thaliana (Mouse-ear cress).